The chain runs to 637 residues: 1-deoxy-D-xylulose-5-phosphate synthase (637 aa).

Residues His73 and 113-115 (SHA) each bind thiamine diphosphate. Asp145 serves as a coordination point for Mg(2+). Thiamine diphosphate contacts are provided by residues 146-147 (GA), Asn175, Tyr286, and Glu367. Position 175 (Asn175) interacts with Mg(2+).

This sequence belongs to the transketolase family. DXPS subfamily. Homodimer. The cofactor is Mg(2+). Thiamine diphosphate serves as cofactor.

The catalysed reaction is D-glyceraldehyde 3-phosphate + pyruvate + H(+) = 1-deoxy-D-xylulose 5-phosphate + CO2. It participates in metabolic intermediate biosynthesis; 1-deoxy-D-xylulose 5-phosphate biosynthesis; 1-deoxy-D-xylulose 5-phosphate from D-glyceraldehyde 3-phosphate and pyruvate: step 1/1. Its function is as follows. Catalyzes the acyloin condensation reaction between C atoms 2 and 3 of pyruvate and glyceraldehyde 3-phosphate to yield 1-deoxy-D-xylulose-5-phosphate (DXP). The protein is 1-deoxy-D-xylulose-5-phosphate synthase of Thermobifida fusca (strain YX).